Here is a 313-residue protein sequence, read N- to C-terminus: Foldase protein PrsA (313 aa).

The N-terminal stretch at 1 to 20 is a signal peptide; that stretch reads MKKKLLAGAITLLSVATLAA. A lipid anchor (N-palmitoyl cysteine) is attached at Cys21. Residue Cys21 is the site of S-diacylglycerol cysteine attachment. The PpiC domain maps to 143–241; the sequence is TPDVTAQIIR…SQYYIVKLTK (99 aa).

This sequence belongs to the PrsA family.

The protein localises to the cell membrane. The enzyme catalyses [protein]-peptidylproline (omega=180) = [protein]-peptidylproline (omega=0). Functionally, plays a major role in protein secretion by helping the post-translocational extracellular folding of several secreted proteins. In Streptococcus pneumoniae (strain ATCC BAA-255 / R6), this protein is Foldase protein PrsA.